Reading from the N-terminus, the 1043-residue chain is MNWPFFRAAVVLFIFLVVLEVNSDFRIQVRDYNTKNGTIKWHSLRRQKREWIKFAAACREGEDNSKRNPIAKIHSDCAANQQVTYRISGVGIDQPPYGIFVINQKTGEINITSIVDREVTPFFIIYCRALNSLGQDLEKPLELRVRVLDINDNPPVFSMSTFVGEIEENSNANTLVMVLNATDADEPNNLNSKIAFKIIRQEPSDSPMFIINRYTGEIRTMNNFLDREQYGQYSLAVRGSDRDGGADGMSAECECNIKILDVNDNIPYMELPTQSISIEENSLNSNLLQIRVIDLDEEFSANWMAVIFFISGNEGNWFEIEMNERTNVGTLKVVKPLDFEAMNNLQLSLGVRNKAEFHQSIMSQYKLTATAISVTVLNVVEGSVFRPGSKTFVVNSNMGQNYKIGEYVAWDLDANRPSTTVRYVMGRNPTDLLAIDSKTAIITLRNKVTMEQYKILGGKYQGTILSIDDALQRTCTGTIVINLENGGWKTERPNVNGSTTSAYGLTSGGVTTNGYTTGGGVGTVTFAVGTNGYGVGTGVYQPLRDNVHFGPAGIGLLIMGFLVLGLVPFLLMCCDCGGAPGGGAAFEPVPECSDGAIHSWAVEGAQADPGVLANSAVPCIPVTNANVIEYVDNSGVYTNEYGAREMQDLGGGERTTGFELTDGVKMSGGPEICQEYPGTLRRNSMRECREGGLNMNFMESYFCQKAYAYADEDEGRPSNDCLLIYDIEGAGSPAGSVGCCSFIGEDLDDSFLDTLGPKFKKLADISLGKDVEPFPDSDPSWPPKSTEPVCPPQGTEPTGGGHPPISPRFGTTTVISENTYPSGPGVQHPTPIPDPLGYGNVTVTESYTSSGTLKPSVHIHDNRHASNVVVTERVVGPISGADLQGMLEMPDLRDGSNVIVTERVIAPSSSLPTTLTIPDPRQSSNVVVTERVIQPTSGIVGNLSMHPELSNTHNVIVTERVVSGSGITGSSSLLGSAGGGSGGGIGLGSLGGGGGLSSSLGGAATIGHLRGSAEHHFSNTLGSASPTTTRSRITKYSTVQYTK.

Residues 1-23 form the signal peptide; that stretch reads MNWPFFRAAVVLFIFLVVLEVNS. A propeptide spanning residues 24–49 is cleaved from the precursor; the sequence is DFRIQVRDYNTKNGTIKWHSLRRQKR. 4 consecutive Cadherin domains span residues 50-158, 159-270, 271-385, and 386-498; these read EWIK…PVFS, MSTF…PYME, LPTQ…GSVF, and RPGS…VNGS. The Extracellular portion of the chain corresponds to 50 to 551; it reads EWIKFAAACR…PLRDNVHFGP (502 aa). N-linked (GlcNAc...) asparagine glycosylation is found at Asn-110 and Asn-180. N-linked (GlcNAc...) asparagine glycosylation occurs at Asn-496. The chain crosses the membrane as a helical span at residues 552–572; sequence AGIGLLIMGFLVLGLVPFLLM. Residues 573-1043 are Cytoplasmic-facing; that stretch reads CCDCGGAPGG…TKYSTVQYTK (471 aa). Residues 770 to 807 form a disordered region; it reads DVEPFPDSDPSWPPKSTEPVCPPQGTEPTGGGHPPISP. Desmoglein repeat repeat units lie at residues 819–845, 846–875, 876–905, 906–933, and 934–962; these read TYPS…TVTE, SYTS…ERVV, GPIS…ERVI, APSS…ERVI, and QPTS…ERVV.

In terms of assembly, binds to JUP/plakoglobin. Interacts with PKP2. Interacts with DSC3; there is evidence to suggest that the interaction promotes cell-cell adhesion of keratinocytes. As to expression, expressed in the epidermis. Expressed in the muzzle epithelium.

It localises to the cell membrane. It is found in the cell junction. The protein resides in the desmosome. The protein localises to the cytoplasm. Its subcellular location is the nucleus. Its function is as follows. Component of intercellular desmosome junctions. Involved in the interaction of plaque proteins and intermediate filaments mediating cell-cell adhesion. The chain is Desmoglein-1 (DSG1) from Bos taurus (Bovine).